The sequence spans 423 residues: Dihydroorotase (423 aa).

Zn(2+)-binding residues include histidine 56 and histidine 58. Substrate contacts are provided by residues 58–60 (HFR) and asparagine 89. Zn(2+) contacts are provided by lysine 137, histidine 168, histidine 227, and aspartate 302. Lysine 137 is subject to N6-carboxylysine. Aspartate 302 is a catalytic residue. A substrate-binding site is contributed by histidine 306.

It belongs to the metallo-dependent hydrolases superfamily. DHOase family. Class I DHOase subfamily. It depends on Zn(2+) as a cofactor.

The catalysed reaction is (S)-dihydroorotate + H2O = N-carbamoyl-L-aspartate + H(+). It participates in pyrimidine metabolism; UMP biosynthesis via de novo pathway; (S)-dihydroorotate from bicarbonate: step 3/3. In terms of biological role, catalyzes the reversible cyclization of carbamoyl aspartate to dihydroorotate. The sequence is that of Dihydroorotase from Methanocaldococcus jannaschii (strain ATCC 43067 / DSM 2661 / JAL-1 / JCM 10045 / NBRC 100440) (Methanococcus jannaschii).